Here is a 211-residue protein sequence, read N- to C-terminus: Transcription factor ces-2 (211 aa).

Low complexity predominate over residues 83-101 (VSSRSSTVSSSHFSSPQRS). Disordered stretches follow at residues 83–152 (VSSR…HALE) and 184–211 (NSEVSCESNDSTETNDSNDSKSDSTIEV). A compositionally biased stretch (basic and acidic residues) spans 111–152 (PEEKKDSAYFERRRKNNDAAKRSRDARRQKEEQIASKAHALE). The 64-residue stretch at 116 to 179 (DSAYFERRRK…AQLRFLLFSK (64 aa)) folds into the bZIP domain. Residues 122–140 (RRRKNNDAAKRSRDARRQK) form a basic motif region. Positions 144-172 (IASKAHALERENMQLRGKVSSLEQEAAQL) are leucine-zipper. The span at 190 to 200 (ESNDSTETNDS) shows a compositional bias: low complexity. Residues 201 to 211 (NDSKSDSTIEV) are compositionally biased toward basic and acidic residues.

It belongs to the bZIP family. Interacts with NFIL3 transcription factor homolog atf-2.

The protein resides in the nucleus. Transcription factor. Required to activate programmed cell death in the sister cells of the serotoninergic neurosecretory motor (NSM) neurons. Negatively regulates the activity of ces-1 which in turn negatively regulates the activities of cell-killing genes. Binds to the DNA sequence 5'-RTTACGTAAY-3'. Involved in the development of the excretory duct cell, by positively modulating embryonic transcription of putative transcription factor lin-48, acting in concert with NFIL3 transcription factor homolog atf-2. Positively modulates expression of neuropeptide pigment dispersing factor homologs pdf-1 and pdf-2. The chain is Transcription factor ces-2 (ces-2) from Caenorhabditis elegans.